Consider the following 503-residue polypeptide: Probable cytosol aminopeptidase (503 aa).

2 residues coordinate Mn(2+): lysine 270 and aspartate 275. The active site involves lysine 282. Mn(2+) is bound by residues aspartate 293, aspartate 352, and glutamate 354. Arginine 356 is an active-site residue.

Belongs to the peptidase M17 family. Requires Mn(2+) as cofactor.

Its subcellular location is the cytoplasm. The enzyme catalyses Release of an N-terminal amino acid, Xaa-|-Yaa-, in which Xaa is preferably Leu, but may be other amino acids including Pro although not Arg or Lys, and Yaa may be Pro. Amino acid amides and methyl esters are also readily hydrolyzed, but rates on arylamides are exceedingly low.. It carries out the reaction Release of an N-terminal amino acid, preferentially leucine, but not glutamic or aspartic acids.. In terms of biological role, presumably involved in the processing and regular turnover of intracellular proteins. Catalyzes the removal of unsubstituted N-terminal amino acids from various peptides. This Shigella dysenteriae serotype 1 (strain Sd197) protein is Probable cytosol aminopeptidase.